A 261-amino-acid chain; its full sequence is Pyridoxine-5'-phosphate oxidase (261 aa).

42–45 (RGDR) provides a ligand contact to pyridoxal 5'-phosphate. Residue 95 to 98 (RMLL) participates in FMN binding. A pyridoxal 5'-phosphate-binding site is contributed by Lys100. FMN-binding positions include 110–111 (FT), 116–117 (RK), and Gln139. Pyridoxal 5'-phosphate-binding residues include Tyr157, Arg161, and Ser165. Residues 174-175 (QS) and Trp219 contribute to the FMN site. 225–227 (RLH) provides a ligand contact to pyridoxal 5'-phosphate. Position 229 (Arg229) interacts with FMN. Thr238 carries the post-translational modification Phosphothreonine. Ser241 carries the post-translational modification Phosphoserine.

It belongs to the pyridoxamine 5'-phosphate oxidase family. In terms of assembly, homodimer. It depends on FMN as a cofactor. As to expression, ubiquitous. Expressed in liver, brain, lung, prostate and stomach (at protein level).

It carries out the reaction pyridoxine 5'-phosphate + O2 = pyridoxal 5'-phosphate + H2O2. It catalyses the reaction pyridoxamine 5'-phosphate + O2 + H2O = pyridoxal 5'-phosphate + H2O2 + NH4(+). It functions in the pathway cofactor metabolism; pyridoxal 5'-phosphate salvage; pyridoxal 5'-phosphate from pyridoxamine 5'-phosphate: step 1/1. The protein operates within cofactor metabolism; pyridoxal 5'-phosphate salvage; pyridoxal 5'-phosphate from pyridoxine 5'-phosphate: step 1/1. Functionally, catalyzes the oxidation of either pyridoxine 5'-phosphate (PNP) or pyridoxamine 5'-phosphate (PMP) into pyridoxal 5'-phosphate (PLP). The chain is Pyridoxine-5'-phosphate oxidase (PNPO) from Homo sapiens (Human).